The chain runs to 279 residues: MGNATQVETDSAALMAEPRLVAETGVAARIAHIATPVLADLGYRLVRVKLSAQDGMTVQIMAERPDGAMTVNDCEAVSAALSPALDVEDVVKQAYRLEISSPGIDRPLVRVSDFRRALDQEARIELRLGLDGRKRFRGLIKGVTGAGAAAVVTLERVDAKPGEAVEAVLPLDDLAEAKLVLTEELIRAALRAAKAALAEEGEPEEQEEGGGEAAPAGKAERGPGRFTPKPAKAKSAQGKPVKAKPVLPAGVKTQFKQLKSGRLQGLAREGAPALRPTPK.

The segment at 197–279 is disordered; sequence LAEEGEPEEQ…GAPALRPTPK (83 aa). Over residues 199–210 the composition is skewed to acidic residues; sequence EEGEPEEQEEGG.

Belongs to the RimP family.

It localises to the cytoplasm. Its function is as follows. Required for maturation of 30S ribosomal subunits. The chain is Ribosome maturation factor RimP from Methylocella silvestris (strain DSM 15510 / CIP 108128 / LMG 27833 / NCIMB 13906 / BL2).